The following is a 103-amino-acid chain: Glycoprotein 24B (103 aa).

The protein belongs to the csb family. In terms of processing, O-glycosylated.

Its subcellular location is the cell surface. Functionally, cell-cell adhesion during early development. In Dictyostelium discoideum (Social amoeba), this protein is Glycoprotein 24B (csbB).